A 272-amino-acid chain; its full sequence is Putative UTP--glucose-1-phosphate uridylyltransferase (272 aa).

It belongs to the UDPGP type 2 family.

The enzyme catalyses alpha-D-glucose 1-phosphate + UTP + H(+) = UDP-alpha-D-glucose + diphosphate. This Bacillus subtilis (strain 168) protein is Putative UTP--glucose-1-phosphate uridylyltransferase (ytdA).